Here is a 338-residue protein sequence, read N- to C-terminus: uncharacterized protein (338 aa).

This sequence belongs to the MG032/MG096/MG288 family.

This is an uncharacterized protein from Mycoplasma pneumoniae (strain ATCC 29342 / M129 / Subtype 1) (Mycoplasmoides pneumoniae).